The primary structure comprises 331 residues: Probable cytosolic iron-sulfur protein assembly protein Ciao1 (331 aa).

WD repeat units follow at residues 12 to 51 (GHKGRIWGVAWHPKGNSFASCGEDKAIRIWSLSGNTWTTK), 57 to 96 (GHKRTIREVRWSPCGEYLASASFDATTAIWSKHECTATLE), 97 to 136 (GHENEVKSVSWSRSGGLLATCSRDKSVWIWEVAGDDEFEC), 142 to 181 (AHSQDVKRVVWHPTKEILASASYDNTIKMYAESALDSDWD), 188 to 227 (SHTSTVWSIDFDADGERLVSCSDDATLKIWRAYHPGNEAG), 246 to 285 (LHTRAIYDVSWCKLTGLIASACGDDAIRIFKESSDSKRDA), and 297 to 331 (AHEQDVNAVEWNPVNVGQLISCSDDGTIKIWKLQE).

It belongs to the WD repeat CIA1 family.

Essential component of the cytosolic iron-sulfur (Fe/S) protein assembly machinery. Required for the maturation of extramitochondrial Fe/S proteins. The sequence is that of Probable cytosolic iron-sulfur protein assembly protein Ciao1 from Drosophila mojavensis (Fruit fly).